The sequence spans 252 residues: Putative zinc finger CCCH domain-containing protein 58 (252 aa).

The C3H1-type zinc-finger motif lies at 35–62; that stretch reads NHKSVLCMKWREGRCHNGVACRYAHGEE. 3 disordered regions span residues 71–95, 109–180, and 215–252; these read RVGG…SGST, RHGR…SAAD, and TATS…APPK. 2 stretches are compositionally biased toward low complexity: residues 133–149 and 229–238; these read SARS…TTPP and ITTTTSSSTT.

The polypeptide is Putative zinc finger CCCH domain-containing protein 58 (Oryza sativa subsp. japonica (Rice)).